The primary structure comprises 596 residues: Protein kinase C iota type (596 aa).

Residues Met-1–His-12 are compositionally biased toward polar residues. The tract at residues Met-1–Asp-21 is disordered. Pro-2 carries the N-acetylproline modification. The required for interaction with RAB2 stretch occupies residues Pro-2–Val-28. The segment at Pro-2–Asp-253 is regulatory domain. The residue at position 3 (Thr-3) is a Phosphothreonine. Ser-7 and Ser-8 each carry phosphoserine. Thr-9 is modified (phosphothreonine). Residues Gln-25–Cys-108 enclose the PB1 domain. Residues Asp-72 to Arg-91 are interaction with PARD6A. Residues Tyr-125–Lys-134 carry the Pseudosubstrate motif. The segment at Gly-140 to Cys-190 adopts a Phorbol-ester/DAG-type zinc-finger fold. Positions Phe-254 to Phe-522 constitute a Protein kinase domain. Ile-260 to Val-268 contacts ATP. Phosphotyrosine; by SRC is present on residues Tyr-265 and Tyr-280. Lys-283 contacts ATP. Tyr-334 carries the post-translational modification Phosphotyrosine; by SRC. The active-site Proton acceptor is the Asp-378. Phosphothreonine; by PDPK1 is present on Thr-412. Residues Arg-523 to Glu-594 form the AGC-kinase C-terminal domain. Position 564 is a phosphothreonine (Thr-564).

The protein belongs to the protein kinase superfamily. AGC Ser/Thr protein kinase family. PKC subfamily. As to quaternary structure, forms a complex with SQSTM1 and MP2K5. Interacts directly with SQSTM1. Interacts with IKBKB. Interacts with PARD6A, PARD6B and PARD6G. Part of a quaternary complex containing aPKC, PARD3, a PARD6 protein (PARD6A, PARD6B or PARD6G) and a GTPase protein (CDC42 or RAC1). Part of a complex with LLGL1 and PARD6B. Interacts with ADAP1/CENTA1. Interaction with SMG1, through the ZN-finger domain, activates the kinase activity. Interacts with CDK7. Forms a complex with RAB2A and GAPDH involved in recruitment onto the membrane of vesicular tubular clusters (VTCs). Interacts with ECT2 ('Thr-359' phosphorylated form). Interacts with VAMP2. Interacts with WDFY2 (via WD repeats 1-3). Phosphorylation at Thr-412 in the activation loop is not mandatory for activation. Upon neuronal growth factor (NGF) stimulation, phosphorylated by SRC at Tyr-265, Tyr-280 and Tyr-334. Phosphorylation at Tyr-265 facilitates binding to KPNB1/importin-beta regulating entry of PRKCI into the nucleus. Phosphorylation on Tyr-334 is important for NF-kappa-B stimulation. Phosphorylated at Thr-564 during the initial phase of long term potentiation. In terms of tissue distribution, expressed in dorsal hippocampus (at protein level).

The protein resides in the cytoplasm. It is found in the membrane. It localises to the endosome. Its subcellular location is the nucleus. It catalyses the reaction L-seryl-[protein] + ATP = O-phospho-L-seryl-[protein] + ADP + H(+). The catalysed reaction is L-threonyl-[protein] + ATP = O-phospho-L-threonyl-[protein] + ADP + H(+). Its activity is regulated as follows. Atypical PKCs (PRKCI and PRKCZ) exhibit an elevated basal enzymatic activity (that may be due to the interaction with SMG1 or SQSTM1) and are not regulated by diacylglycerol, phosphatidylserine, phorbol esters or calcium ions. Two specific sites, Thr-412 (activation loop of the kinase domain) and Thr-564 (turn motif), need to be phosphorylated for its full activation. Might also be a target for novel lipid activators that are elevated during nutrient-stimulated insulin secretion. Its function is as follows. Calcium- and diacylglycerol-independent serine/ threonine-protein kinase that plays a general protective role against apoptotic stimuli, is involved in NF-kappa-B activation, cell survival, differentiation and polarity, and contributes to the regulation of microtubule dynamics in the early secretory pathway. Is necessary for BCR-ABL oncogene-mediated resistance to apoptotic drug in leukemia cells, protecting leukemia cells against drug-induced apoptosis. In cultured neurons, prevents amyloid beta protein-induced apoptosis by interrupting cell death process at a very early step. In glioblastoma cells, may function downstream of phosphatidylinositol 3-kinase (PI3K) and PDPK1 in the promotion of cell survival by phosphorylating and inhibiting the pro-apoptotic factor BAD. Can form a protein complex in non-small cell lung cancer (NSCLC) cells with PARD6A and ECT2 and regulate ECT2 oncogenic activity by phosphorylation, which in turn promotes transformed growth and invasion. In response to nerve growth factor (NGF), acts downstream of SRC to phosphorylate and activate IRAK1, allowing the subsequent activation of NF-kappa-B and neuronal cell survival. Functions in the organization of the apical domain in epithelial cells by phosphorylating EZR. This step is crucial for activation and normal distribution of EZR at the early stages of intestinal epithelial cell differentiation. Forms a protein complex with LLGL1 and PARD6B independently of PARD3 to regulate epithelial cell polarity. Plays a role in microtubule dynamics in the early secretory pathway through interaction with RAB2A and GAPDH and recruitment to vesicular tubular clusters (VTCs). In human coronary artery endothelial cells (HCAEC), is activated by saturated fatty acids and mediates lipid-induced apoptosis. Downstream of PI3K is required for insulin-stimulated glucose transport. Activates RAB4A and promotes its association with KIF3A which is required for the insulin-induced SLC2A4/GLUT4 translocation in adipocytes. Is essential in early embryogenesis and development of differentiating photoreceptors by playing a role in the establishment of epithelial and neuronal polarity. Involved in early synaptic long term potentiation phase in CA1 hippocampal cells and short term memory formation. The polypeptide is Protein kinase C iota type (Prkci) (Rattus norvegicus (Rat)).